An 87-amino-acid chain; its full sequence is Cell division topological specificity factor (87 aa).

The protein belongs to the MinE family.

In terms of biological role, prevents the cell division inhibition by proteins MinC and MinD at internal division sites while permitting inhibition at polar sites. This ensures cell division at the proper site by restricting the formation of a division septum at the midpoint of the long axis of the cell. The chain is Cell division topological specificity factor from Vibrio parahaemolyticus serotype O3:K6 (strain RIMD 2210633).